The following is a 254-amino-acid chain: 3-deoxy-manno-octulosonate cytidylyltransferase (254 aa).

Belongs to the KdsB family.

The protein resides in the cytoplasm. It carries out the reaction 3-deoxy-alpha-D-manno-oct-2-ulosonate + CTP = CMP-3-deoxy-beta-D-manno-octulosonate + diphosphate. Its pathway is nucleotide-sugar biosynthesis; CMP-3-deoxy-D-manno-octulosonate biosynthesis; CMP-3-deoxy-D-manno-octulosonate from 3-deoxy-D-manno-octulosonate and CTP: step 1/1. The protein operates within bacterial outer membrane biogenesis; lipopolysaccharide biosynthesis. Functionally, activates KDO (a required 8-carbon sugar) for incorporation into bacterial lipopolysaccharide in Gram-negative bacteria. The sequence is that of 3-deoxy-manno-octulosonate cytidylyltransferase from Geobacter metallireducens (strain ATCC 53774 / DSM 7210 / GS-15).